A 293-amino-acid chain; its full sequence is Small ribosomal subunit protein uS2m (293 aa).

Positions 21–38 (GRAAQRGRTLGSAAAAAA) are enriched in low complexity. Disordered stretches follow at residues 21-49 (GRAA…DRSA) and 263-293 (QGAP…GHSP). Residues 39-49 (REPERDSDRSA) show a composition bias toward basic and acidic residues. Over residues 267–279 (GPHPANPAAPGAP) the composition is skewed to pro residues.

This sequence belongs to the universal ribosomal protein uS2 family. Component of the mitochondrial ribosome small subunit (28S) which comprises a 12S rRNA and about 30 distinct proteins.

Its subcellular location is the mitochondrion. Required for mitoribosome formation and stability, and mitochondrial translation. This Bos taurus (Bovine) protein is Small ribosomal subunit protein uS2m (MRPS2).